The sequence spans 69 residues: uncharacterized protein (69 aa).

Residues 22 to 48 (LFRKSRELSPIKPVRTPTPPAPTPPPM) form a disordered region. Positions 37 to 48 (TPTPPAPTPPPM) are enriched in pro residues.

This is an uncharacterized protein from Lepidoptera (butterflies and moths).